The chain runs to 209 residues: Transcription factor 23 (209 aa).

Disordered stretches follow at residues 1-20 and 54-85; these read MSQE…GHNK and LSRA…ARER. The span at 72-85 shows a compositional bias: basic and acidic residues; it reads GRSEASPENAARER. One can recognise a bHLH domain in the interval 75 to 127; the sequence is EASPENAARERTRVKTLRQAFLALQAALPAVPPDTKLSKLDVLVLATSYIAHL.

In terms of assembly, forms inactive heterodimeric complex with TCF3. In terms of tissue distribution, highly expressed in the uterus (predominantly in myometrium), ovary, and testis. Expression in the uterus is higher in the diestrus phase than in the estrus phase and reaches a maximum at 7.5 dpc. Expression declines towards the time of delivery and returns to the non-pregnant level 4 days after delivery. Low expression seen in lung, heart, intestine, and spleen.

The protein localises to the nucleus. Inhibits E-box-mediated binding and transactivation of bHLH factors. Inhibitory effect is similar to that of ID proteins. Inhibits the formation of TCF3 and MYOD1 homodimers and heterodimers. Lacks DNA binding activity. May be involved in the regulation or modulation of smooth muscle contraction of the uterus during pregnancy and particularly around the time of delivery. Seems to play a role in the inhibition of myogenesis. This Mus musculus (Mouse) protein is Transcription factor 23 (Tcf23).